A 302-amino-acid chain; its full sequence is Protein translocase subunit SecF (302 aa).

The next 6 helical transmembrane spans lie at phenylalanine 12–glycine 32, tyrosine 138–phenylalanine 158, alanine 166–isoleucine 186, leucine 190–valine 210, phenylalanine 249–glycine 269, and valine 272–methionine 292.

Belongs to the SecD/SecF family. SecF subfamily. Forms a complex with SecD. Part of the essential Sec protein translocation apparatus which comprises SecA, SecYEG and auxiliary proteins SecDF. Other proteins may also be involved.

Its subcellular location is the cell inner membrane. Its function is as follows. Part of the Sec protein translocase complex. Interacts with the SecYEG preprotein conducting channel. SecDF uses the proton motive force (PMF) to complete protein translocation after the ATP-dependent function of SecA. The protein is Protein translocase subunit SecF of Petrotoga mobilis (strain DSM 10674 / SJ95).